Reading from the N-terminus, the 355-residue chain is Beta-ketoacyl-[acyl-carrier-protein] synthase III (355 aa).

Active-site residues include Cys122 and His280. Residues 281–285 (QANMR) are ACP-binding. Residue Asn311 is part of the active site.

This sequence belongs to the thiolase-like superfamily. FabH family. As to quaternary structure, homodimer.

The protein resides in the cytoplasm. It carries out the reaction malonyl-[ACP] + acetyl-CoA + H(+) = 3-oxobutanoyl-[ACP] + CO2 + CoA. Its pathway is lipid metabolism; fatty acid biosynthesis. In terms of biological role, catalyzes the condensation reaction of fatty acid synthesis by the addition to an acyl acceptor of two carbons from malonyl-ACP. Catalyzes the first condensation reaction which initiates fatty acid synthesis and may therefore play a role in governing the total rate of fatty acid production. Possesses both acetoacetyl-ACP synthase and acetyl transacylase activities. Its substrate specificity determines the biosynthesis of branched-chain and/or straight-chain of fatty acids. The sequence is that of Beta-ketoacyl-[acyl-carrier-protein] synthase III from Kocuria rhizophila (strain ATCC 9341 / DSM 348 / NBRC 103217 / DC2201).